The chain runs to 530 residues: Amidase FVEG_08295 (530 aa).

Catalysis depends on charge relay system residues Lys138 and Ser214. Substrate contacts are provided by residues Ser214 and 235 to 238 (IAGS). Residue Ser238 is the Acyl-ester intermediate of the active site.

Belongs to the amidase family.

The catalysed reaction is a monocarboxylic acid amide + H2O = a monocarboxylate + NH4(+). Its pathway is xenobiotic degradation. Its function is as follows. Amidase; part of the Fusarium detoxification of benzoxazolinone cluster 1 (FDB1) involved in the degradation of benzoxazolinones produced by the host plant. Maize, wheat, and rye produce the 2 benzoxazinone phytoanticipins 2,4-dihy-droxy-7-methoxy-1,4-benzoxazin-3-one (DIMBOA) and 2,4-dihydroxy-1,4-benzoxazin-3-one (DIBOA) that, due to their inherent instability once released, spontaneously degrade to the more stable corresponding benzoxazolinones, 6-methoxy-2-benzoxazolinone (MBOA) and 2-benzoxazolinone (BOA), respectively. The first step in the detoxification of benzoxazolinones involves the hydrolysis of the cyclic ester bond of benzoxazolinones by the FDB1 cluster gamma-lactamase MBL1 to aminophenols. MBL1 is able to convert BOA into 2-aminophenol (2-AP), as well as MBOA into 5-methoxy-2-aminophenol (2-AMP). The FDB2 cluster N-malonyltransferase FDB2/NAT1 then metabolizes aminophenols via N-malonylation to non-toxic malonamic acids. FDB2/NAT1 converts 2-AP into N-(2-hydroxyphenyl) malonamic acid (HPMA) and 2-AMP into N-(2-hydroxy-4-methoxyphenyl) malonamic acid (HMPMA). The duplicated dienlactone hydrolases DLH1 and DLH2 may provide redundant function for hydrolyzing the lactone moiety in the BOA molecule. The roles of the amidases an other enzymes encoded by the 2 FDB clusters have not been identified so far. The protein is Amidase FVEG_08295 of Gibberella moniliformis (strain M3125 / FGSC 7600) (Maize ear and stalk rot fungus).